Reading from the N-terminus, the 718-residue chain is Peroxisomal bifunctional enzyme (718 aa).

The segment at 2–280 (ARYELVKRSV…FAQRTAEKWT (279 aa)) is enoyl-CoA hydratase / isomerase. Residue G100 participates in substrate binding. Positions 281–567 (LPSGAQWNNS…DMVCQQGRFG (287 aa)) are 3-hydroxyacyl-CoA dehydrogenase. Residues 716–718 (SHL) carry the Microbody targeting signal motif.

The protein in the N-terminal section; belongs to the enoyl-CoA hydratase/isomerase family. It in the C-terminal section; belongs to the 3-hydroxyacyl-CoA dehydrogenase family. As to quaternary structure, monomer.

The protein localises to the peroxisome. It catalyses the reaction a (3S)-3-hydroxyacyl-CoA = a (2E)-enoyl-CoA + H2O. The catalysed reaction is a 4-saturated-(3S)-3-hydroxyacyl-CoA = a (3E)-enoyl-CoA + H2O. It carries out the reaction a (3Z)-enoyl-CoA = a 4-saturated (2E)-enoyl-CoA. The enzyme catalyses a (3E)-enoyl-CoA = a 4-saturated (2E)-enoyl-CoA. It catalyses the reaction a (3S)-3-hydroxyacyl-CoA + NAD(+) = a 3-oxoacyl-CoA + NADH + H(+). The catalysed reaction is (2S,3S)-3-hydroxy-2-methylbutanoyl-CoA = (2E)-2-methylbut-2-enoyl-CoA + H2O. It carries out the reaction (3S)-hydroxyhexadecanoyl-CoA + NAD(+) = 3-oxohexadecanoyl-CoA + NADH + H(+). The enzyme catalyses (3S)-hydroxyhexadecanoyl-CoA = (2E)-hexadecenoyl-CoA + H2O. It catalyses the reaction (2E)-hexadecenedioyl-CoA + H2O = (3S)-hydroxyhexadecanedioyl-CoA. The catalysed reaction is (3S)-hydroxyhexadecanedioyl-CoA + NAD(+) = 3-oxohexadecanedioyl-CoA + NADH + H(+). It carries out the reaction (3E,5Z)-tetradecadienoyl-CoA = (2E,5Z)-tetradecadienoyl-CoA. The enzyme catalyses (3E,5Z)-octadienoyl-CoA = (2E,5Z)-octadienoyl-CoA. It catalyses the reaction (3S)-hydroxydecanoyl-CoA + NAD(+) = 3-oxodecanoyl-CoA + NADH + H(+). The catalysed reaction is (3E)-decenoyl-CoA = (2E)-decenoyl-CoA. It carries out the reaction (3Z)-hexenoyl-CoA = (2E)-hexenoyl-CoA. The enzyme catalyses (3E)-hexenoyl-CoA = (2E)-hexenoyl-CoA. It catalyses the reaction (3S)-hydroxydecanoyl-CoA = (2E)-decenoyl-CoA + H2O. The catalysed reaction is (3S)-hydroxyhexanoyl-CoA = (2E)-hexenoyl-CoA + H2O. It functions in the pathway lipid metabolism; fatty acid beta-oxidation. Its function is as follows. Peroxisomal trifunctional enzyme possessing 2-enoyl-CoA hydratase, 3-hydroxyacyl-CoA dehydrogenase, and delta 3, delta 2-enoyl-CoA isomerase activities. Catalyzes two of the four reactions of the long straight chain fatty acids peroxisomal beta-oxidation pathway. Can also use branched-chain fatty acids such as 2-methyl-2E-butenoyl-CoA as a substrate, which is hydrated into (2S,3S)-3-hydroxy-2-methylbutanoyl-CoA. Optimal isomerase for 2,5 double bonds into 3,5 form isomerization in a range of enoyl-CoA species. Also able to isomerize both 3-cis and 3-trans double bonds into the 2-trans form in a range of enoyl-CoA species. Regulates the amount of medium-chain dicarboxylic fatty acids which are essential regulators of all fatty acid oxidation pathways. Also involved in the degradation of long-chain dicarboxylic acids through peroxisomal beta-oxidation. The protein is Peroxisomal bifunctional enzyme (ehhadh) of Danio rerio (Zebrafish).